An 879-amino-acid chain; its full sequence is Phosphoenolpyruvate carboxylase (879 aa).

Residues H138 and K546 contribute to the active site.

Belongs to the PEPCase type 1 family. It depends on Mg(2+) as a cofactor.

It catalyses the reaction oxaloacetate + phosphate = phosphoenolpyruvate + hydrogencarbonate. In terms of biological role, forms oxaloacetate, a four-carbon dicarboxylic acid source for the tricarboxylic acid cycle. The sequence is that of Phosphoenolpyruvate carboxylase from Pectobacterium carotovorum subsp. carotovorum (strain PC1).